The following is a 531-amino-acid chain: Endoglucanase 7 (531 aa).

The N-terminal stretch at 1–27 (MRGRALVLVAALLLQLLLLAAAGGAGA) is a signal peptide. Asp-89 (nucleophile) is an active-site residue. Residues His-430, Asp-482, and Glu-491 contribute to the active site.

It belongs to the glycosyl hydrolase 9 (cellulase E) family. In terms of tissue distribution, ubiquitous.

Its subcellular location is the secreted. It catalyses the reaction Endohydrolysis of (1-&gt;4)-beta-D-glucosidic linkages in cellulose, lichenin and cereal beta-D-glucans.. The chain is Endoglucanase 7 (GLU10) from Oryza sativa subsp. japonica (Rice).